Consider the following 692-residue polypeptide: ATP-dependent DNA helicase DinG (692 aa).

Residues 16 to 293 enclose the Helicase ATP-binding domain; it reads NLGNQLDNFI…AELAEYKKAA (278 aa). 56–63 contributes to the ATP binding site; sequence AGTGIGKS. Residue cysteine 123 coordinates [4Fe-4S] cluster. The DEAH box motif lies at 134–137; the sequence is NNDQ. [4Fe-4S] cluster is bound by residues cysteine 192 and cysteine 202. The DEAH box signature appears at 247 to 250; sequence DEAH. The Helicase C-terminal domain occupies 514-692; that stretch reads LIKTLPEYLE…PPFKRVIEYS (179 aa).

Belongs to the helicase family. DinG subfamily. Type 1 sub-subfamily. Requires [4Fe-4S] cluster as cofactor.

The enzyme catalyses Couples ATP hydrolysis with the unwinding of duplex DNA at the replication fork by translocating in the 5'-3' direction. This creates two antiparallel DNA single strands (ssDNA). The leading ssDNA polymer is the template for DNA polymerase III holoenzyme which synthesizes a continuous strand.. It carries out the reaction ATP + H2O = ADP + phosphate + H(+). Functionally, DNA-dependent ATPase and 5'-3' DNA helicase. Unwinds D-loops, R-loops, forked DNA and G-quadruplex DNA. The sequence is that of ATP-dependent DNA helicase DinG from Photobacterium profundum (strain SS9).